The following is a 238-amino-acid chain: Alpha-tubulin N-acetyltransferase (238 aa).

The 196-residue stretch at 1 to 196 (MEFDFDISQS…NNFVVFEDLF (196 aa)) folds into the N-acetyltransferase domain. Residues 129-142 (FYVH…GNGK) and 165-174 (SFKFLSFLQK) each bind acetyl-CoA.

The protein belongs to the acetyltransferase ATAT1 family.

The catalysed reaction is L-lysyl-[alpha-tubulin] + acetyl-CoA = N(6)-acetyl-L-lysyl-[alpha-tubulin] + CoA + H(+). Functionally, specifically acetylates 'Lys-40' in alpha-tubulin on the lumenal side of microtubules. Promotes microtubule destabilization and accelerates microtubule dynamics; this activity may be independent of acetylation activity. Acetylates alpha-tubulin with a slow enzymatic rate, due to a catalytic site that is not optimized for acetyl transfer. Enters the microtubule through each end and diffuses quickly throughout the lumen of microtubules. Acetylates only long/old microtubules because of its slow acetylation rate since it does not have time to act on dynamically unstable microtubules before the enzyme is released. This Trichoplax adhaerens (Trichoplax reptans) protein is Alpha-tubulin N-acetyltransferase.